The sequence spans 296 residues: MSFFHANQREALNQSLAEVQGQINVSFEFFPPRTSEMEQTLWNSIDRLSSLKPKFVSVTYGANSGERDRTHSVIKGIKERTGLEAAPHLTCIDATRDELRTIARDYWNNGIRHIVALRGDLPPGSGKPEMYAADLVGLLKEVADFDISVAAYPEVHPEAKSAQADLLNLKRKVDAGANRAITQFFFDVESYLRFRDRCVSAGIDVEIIPGILPVSNFKQAKKFADMTNVRIPSWMSLMFEGLDNDAETRKLVGANIAMDMVKILSREGVKDFHFYTLNRAEMSYAICHTLGVRPGL.

Residue E28 is the Proton donor/acceptor of the active site. An NADH-binding site is contributed by T59. Positions 60, 62, 88, 118, 119, 120, 132, 152, 156, 159, 165, 168, 171, and 172 each coordinate FAD. Residue D120 participates in (6S)-5-methyl-5,6,7,8-tetrahydrofolate binding. Q183 contacts NADH. Residues Q183, Q219, and R279 each coordinate (6S)-5-methyl-5,6,7,8-tetrahydrofolate.

Belongs to the methylenetetrahydrofolate reductase family. Requires FAD as cofactor.

The catalysed reaction is (6S)-5-methyl-5,6,7,8-tetrahydrofolate + NAD(+) = (6R)-5,10-methylene-5,6,7,8-tetrahydrofolate + NADH + H(+). The protein operates within one-carbon metabolism; tetrahydrofolate interconversion. It participates in amino-acid biosynthesis; L-methionine biosynthesis via de novo pathway. In terms of biological role, catalyzes the NADH-dependent reduction of 5,10-methylenetetrahydrofolate to 5-methyltetrahydrofolate. Is required to provide the methyl group necessary for methionine synthetase to convert homocysteine to methionine; the methyl group is given by 5-methyltetrahydrofolate. The polypeptide is 5,10-methylenetetrahydrofolate reductase (metF) (Salmonella typhimurium (strain LT2 / SGSC1412 / ATCC 700720)).